The primary structure comprises 163 residues: Allophycocyanin alpha-B chain (163 aa).

Residue Asn-71 is modified to N4-methylasparagine. Residue Cys-81 participates in (2R,3E)-phycocyanobilin binding.

It belongs to the phycobiliprotein family. As to quaternary structure, heterodimer of an alpha and a beta chain. Contains one covalently linked bilin chromophore.

The protein resides in the cellular thylakoid membrane. Functionally, light-harvesting photosynthetic bile pigment-protein from the phycobiliprotein complex. Allophycocyanin has a maximum absorption at approximately 650 nanometers. This Synechococcus sp. (strain ATCC 27144 / PCC 6301 / SAUG 1402/1) (Anacystis nidulans) protein is Allophycocyanin alpha-B chain.